Consider the following 270-residue polypeptide: Formamidopyrimidine-DNA glycosylase (270 aa).

P2 acts as the Schiff-base intermediate with DNA in catalysis. Catalysis depends on E3, which acts as the Proton donor. K58 acts as the Proton donor; for beta-elimination activity in catalysis. DNA-binding residues include H91, R110, and R151. An FPG-type zinc finger spans residues 236-270 (AVYGREGEPCTHCGAPLQGVRIGGRATIYCSQCQR). R260 acts as the Proton donor; for delta-elimination activity in catalysis.

Belongs to the FPG family. In terms of assembly, monomer. The cofactor is Zn(2+).

The catalysed reaction is Hydrolysis of DNA containing ring-opened 7-methylguanine residues, releasing 2,6-diamino-4-hydroxy-5-(N-methyl)formamidopyrimidine.. The enzyme catalyses 2'-deoxyribonucleotide-(2'-deoxyribose 5'-phosphate)-2'-deoxyribonucleotide-DNA = a 3'-end 2'-deoxyribonucleotide-(2,3-dehydro-2,3-deoxyribose 5'-phosphate)-DNA + a 5'-end 5'-phospho-2'-deoxyribonucleoside-DNA + H(+). Functionally, involved in base excision repair of DNA damaged by oxidation or by mutagenic agents. Acts as a DNA glycosylase that recognizes and removes damaged bases. Has a preference for oxidized purines, such as 7,8-dihydro-8-oxoguanine (8-oxoG). Has AP (apurinic/apyrimidinic) lyase activity and introduces nicks in the DNA strand. Cleaves the DNA backbone by beta-delta elimination to generate a single-strand break at the site of the removed base with both 3'- and 5'-phosphates. The chain is Formamidopyrimidine-DNA glycosylase from Acidithiobacillus ferrooxidans (strain ATCC 23270 / DSM 14882 / CIP 104768 / NCIMB 8455) (Ferrobacillus ferrooxidans (strain ATCC 23270)).